Consider the following 296-residue polypeptide: tRNA dimethylallyltransferase (296 aa).

ATP is bound at residue 11–18 (GPTAVGKT). Residue 13-18 (TAVGKT) participates in substrate binding. An interaction with substrate tRNA region spans residues 36–39 (DSQQ).

Belongs to the IPP transferase family. In terms of assembly, monomer. Mg(2+) is required as a cofactor.

It carries out the reaction adenosine(37) in tRNA + dimethylallyl diphosphate = N(6)-dimethylallyladenosine(37) in tRNA + diphosphate. Catalyzes the transfer of a dimethylallyl group onto the adenine at position 37 in tRNAs that read codons beginning with uridine, leading to the formation of N6-(dimethylallyl)adenosine (i(6)A). The protein is tRNA dimethylallyltransferase of Streptococcus agalactiae serotype Ia (strain ATCC 27591 / A909 / CDC SS700).